A 173-amino-acid polypeptide reads, in one-letter code: Shikimate kinase 1 (173 aa).

Residue 14-19 (GAGKST) participates in ATP binding. Serine 18 serves as a coordination point for Mg(2+). Aspartate 36, arginine 60, and glycine 82 together coordinate substrate. Arginine 120 contacts ATP. Arginine 140 contacts substrate. Glutamine 157 contacts ATP.

It belongs to the shikimate kinase family. As to quaternary structure, monomer. Mg(2+) is required as a cofactor.

It localises to the cytoplasm. It catalyses the reaction shikimate + ATP = 3-phosphoshikimate + ADP + H(+). Its pathway is metabolic intermediate biosynthesis; chorismate biosynthesis; chorismate from D-erythrose 4-phosphate and phosphoenolpyruvate: step 5/7. Its function is as follows. Catalyzes the specific phosphorylation of the 3-hydroxyl group of shikimic acid using ATP as a cosubstrate. In Shigella boydii serotype 18 (strain CDC 3083-94 / BS512), this protein is Shikimate kinase 1.